Reading from the N-terminus, the 67-residue chain is Sec-independent protein translocase protein TatA (67 aa).

Residues 1–21 (MFGLGGQELVLILLIVLLLFG) traverse the membrane as a helical segment.

The protein belongs to the TatA/E family. As to quaternary structure, forms a complex with TatC.

Its subcellular location is the cell inner membrane. Its function is as follows. Part of the twin-arginine translocation (Tat) system that transports large folded proteins containing a characteristic twin-arginine motif in their signal peptide across membranes. TatA could form the protein-conducting channel of the Tat system. The protein is Sec-independent protein translocase protein TatA of Chlorobaculum tepidum (strain ATCC 49652 / DSM 12025 / NBRC 103806 / TLS) (Chlorobium tepidum).